Here is a 124-residue protein sequence, read N- to C-terminus: Histone H2A (124 aa).

The span at 1 to 18 (MSGRGKGGKAKGKSKSRS) shows a compositional bias: basic residues. Positions 1–23 (MSGRGKGGKAKGKSKSRSSRAGL) are disordered. An N-acetylserine modification is found at Ser-2. Ser-2 carries the phosphoserine modification. Gln-104 bears the N5-methylglutamine mark.

The protein belongs to the histone H2A family. In terms of assembly, the nucleosome is a histone octamer containing two molecules each of H2A, H2B, H3 and H4 assembled in one H3-H4 heterotetramer and two H2A-H2B heterodimers. The octamer wraps approximately 147 bp of DNA. Post-translationally, the N-terminal serine is acetylated. That serine is also phosphorylated in approximately 60% of the molecules isolated from erythrocytes.

It localises to the nucleus. The protein localises to the chromosome. Functionally, core component of nucleosome. Nucleosomes wrap and compact DNA into chromatin, limiting DNA accessibility to the cellular machineries which require DNA as a template. Histones thereby play a central role in transcription regulation, DNA repair, DNA replication and chromosomal stability. DNA accessibility is regulated via a complex set of post-translational modifications of histones, also called histone code, and nucleosome remodeling. In Sipunculus nudus (Sipunculan worm), this protein is Histone H2A.